The sequence spans 305 residues: Glycine--tRNA ligase alpha subunit (305 aa).

It belongs to the class-II aminoacyl-tRNA synthetase family. Tetramer of two alpha and two beta subunits.

The protein localises to the cytoplasm. The enzyme catalyses tRNA(Gly) + glycine + ATP = glycyl-tRNA(Gly) + AMP + diphosphate. This Janthinobacterium sp. (strain Marseille) (Minibacterium massiliensis) protein is Glycine--tRNA ligase alpha subunit.